The following is a 325-amino-acid chain: Small ribosomal subunit protein RACK1 (325 aa).

WD repeat units lie at residues 13–44 (AHTD…ILWH), 61–91 (GHSH…RLWD), 103–133 (GHTK…KLWN), 147–179 (AHSD…KVWN), 191–221 (GHSG…LLWD), 232–261 (DAGS…KIWD), and 291–321 (KKVI…RVWG).

It belongs to the WD repeat G protein beta family. Ribosomal protein RACK1 subfamily.

Its function is as follows. Plays a role in hormone-mediated cell division. The protein is Small ribosomal subunit protein RACK1 (GB1) of Medicago sativa (Alfalfa).